Here is a 259-residue protein sequence, read N- to C-terminus: tRNA pseudouridine synthase A (259 aa).

Asp-50 functions as the Nucleophile in the catalytic mechanism. Residue Tyr-101 coordinates substrate.

This sequence belongs to the tRNA pseudouridine synthase TruA family.

The enzyme catalyses uridine(38/39/40) in tRNA = pseudouridine(38/39/40) in tRNA. In terms of biological role, formation of pseudouridine at positions 38, 39 and 40 in the anticodon stem and loop of transfer RNAs. This chain is tRNA pseudouridine synthase A, found in Methanocaldococcus jannaschii (strain ATCC 43067 / DSM 2661 / JAL-1 / JCM 10045 / NBRC 100440) (Methanococcus jannaschii).